A 372-amino-acid chain; its full sequence is Tyrosine--tRNA ligase (372 aa).

Tyrosine 37, tyrosine 169, glutamine 173, aspartate 176, and glutamine 191 together coordinate L-tyrosine. The 'KMSKS' region motif lies at 246 to 250 (KMSKS). Lysine 249 serves as a coordination point for ATP.

Belongs to the class-I aminoacyl-tRNA synthetase family. TyrS type 4 subfamily. As to quaternary structure, homodimer.

Its subcellular location is the cytoplasm. The enzyme catalyses tRNA(Tyr) + L-tyrosine + ATP = L-tyrosyl-tRNA(Tyr) + AMP + diphosphate + H(+). Its function is as follows. Catalyzes the attachment of tyrosine to tRNA(Tyr) in a two-step reaction: tyrosine is first activated by ATP to form Tyr-AMP and then transferred to the acceptor end of tRNA(Tyr). The chain is Tyrosine--tRNA ligase from Pyrobaculum arsenaticum (strain DSM 13514 / JCM 11321 / PZ6).